Consider the following 348-residue polypeptide: S-adenosylmethionine:tRNA ribosyltransferase-isomerase (348 aa).

This sequence belongs to the QueA family. As to quaternary structure, monomer.

The protein resides in the cytoplasm. The enzyme catalyses 7-aminomethyl-7-carbaguanosine(34) in tRNA + S-adenosyl-L-methionine = epoxyqueuosine(34) in tRNA + adenine + L-methionine + 2 H(+). Its pathway is tRNA modification; tRNA-queuosine biosynthesis. Transfers and isomerizes the ribose moiety from AdoMet to the 7-aminomethyl group of 7-deazaguanine (preQ1-tRNA) to give epoxyqueuosine (oQ-tRNA). In Polynucleobacter necessarius subsp. necessarius (strain STIR1), this protein is S-adenosylmethionine:tRNA ribosyltransferase-isomerase.